Consider the following 502-residue polypeptide: MEFSVKSGSPEKQRSACIVVGVFEPRRLSPVAEQLDKISDGYISSLLRRGDLEGKPGQMLLLHQVPGVLSERVLLVGCGKERELGERQYKEIIQKTISTLNETGSMEAVCFLTELHVKGRDTYWKVRQAVEATKDGLYTFDQFKSVKPETRRPLRKLVFNVPTRRELNLGEKAITHGLAIASGVKASKDLGNMPPNIANPAYLASQARRLADDYETVSTKIIGEQEMEKLGMTSYLAVGRGSKNESMMSIIEYKGNPESEAKPIVLVGKGLTFDSGGISLKPGEGMDEMKYDMCGAASVFGTMKALAKLNLPINVIGVLAGCENMPGSNAYRPGDILTTMSGQTVEVLNTDAEGRLVLCDALTYVERFEPDCVVDVATLTGACVIALGHHISGVISNHNPLSHELVNASEQASDRAWRLPMADEYHEQLKSPFADMANIGGRPAGTITAGCFLSKFAKKYNWAHLDIAGTAWKSGAAKGSTGRPVSMLVQFLLNRSGQETEE.

Mn(2+)-binding residues include Lys269 and Asp274. Lys281 is a catalytic residue. Residues Asp292, Asp351, and Glu353 each coordinate Mn(2+). Arg355 is a catalytic residue.

The protein belongs to the peptidase M17 family. It depends on Mn(2+) as a cofactor.

Its subcellular location is the cytoplasm. The enzyme catalyses Release of an N-terminal amino acid, Xaa-|-Yaa-, in which Xaa is preferably Leu, but may be other amino acids including Pro although not Arg or Lys, and Yaa may be Pro. Amino acid amides and methyl esters are also readily hydrolyzed, but rates on arylamides are exceedingly low.. It catalyses the reaction Release of an N-terminal amino acid, preferentially leucine, but not glutamic or aspartic acids.. Functionally, presumably involved in the processing and regular turnover of intracellular proteins. Catalyzes the removal of unsubstituted N-terminal amino acids from various peptides. This chain is Probable cytosol aminopeptidase, found in Vibrio campbellii (strain ATCC BAA-1116).